The sequence spans 153 residues: Ribosome-binding factor A (153 aa).

Positions 116-153 (DAQVAEQAQGAQYAAGEDAYRTPSDEDDAEGPESAPRV) are disordered. The span at 119–132 (VAEQAQGAQYAAGE) shows a compositional bias: low complexity.

This sequence belongs to the RbfA family. In terms of assembly, monomer. Binds 30S ribosomal subunits, but not 50S ribosomal subunits or 70S ribosomes.

The protein localises to the cytoplasm. One of several proteins that assist in the late maturation steps of the functional core of the 30S ribosomal subunit. Associates with free 30S ribosomal subunits (but not with 30S subunits that are part of 70S ribosomes or polysomes). Required for efficient processing of 16S rRNA. May interact with the 5'-terminal helix region of 16S rRNA. This is Ribosome-binding factor A from Kocuria rhizophila (strain ATCC 9341 / DSM 348 / NBRC 103217 / DC2201).